A 475-amino-acid chain; its full sequence is Adenosylhomocysteinase (475 aa).

Substrate contacts are provided by Thr60, Asp133, and Glu198. 199–201 contributes to the NAD(+) binding site; sequence TTT. Positions 228 and 232 each coordinate substrate. NAD(+) is bound by residues Asn233, 262-267, Glu285, Asn320, 341-343, and Asn389; these read GYGDVG and IGH.

It belongs to the adenosylhomocysteinase family. NAD(+) is required as a cofactor.

It is found in the cytoplasm. The catalysed reaction is S-adenosyl-L-homocysteine + H2O = L-homocysteine + adenosine. Its pathway is amino-acid biosynthesis; L-homocysteine biosynthesis; L-homocysteine from S-adenosyl-L-homocysteine: step 1/1. In terms of biological role, may play a key role in the regulation of the intracellular concentration of adenosylhomocysteine. In Syntrophotalea carbinolica (strain DSM 2380 / NBRC 103641 / GraBd1) (Pelobacter carbinolicus), this protein is Adenosylhomocysteinase.